Reading from the N-terminus, the 2641-residue chain is CCR4-NOT transcription complex subunit let-711 (2641 aa).

The LXXLL motif lies at 660–664 (LSELL). Disordered stretches follow at residues 771 to 887 (SGRS…QNAQ), 936 to 963 (TQRQNSNSGWHAAPAPQRPSGPPTPQQQ), 1197 to 1221 (EGGRHTPVGSAQAGSASSTPTPAAA), 1518 to 1565 (QSKI…SQGA), and 2034 to 2054 (GMNNAMNNGAGNAAHHHAGLQ). Composition is skewed to low complexity over residues 774-795 (SSSVSSGGHVQQSSGSQPQQQQ), 802-839 (LPPSGVVPVQQQPQQPPSLQQQHSQQSLPTPPTTSQQQ), and 853-877 (PAQFAPQPMFPPQAQAQHQHQHMMG). Residues 951–960 (PQRPSGPPTP) are compositionally biased toward pro residues. Low complexity predominate over residues 1205–1221 (GSAQAGSASSTPTPAAA). Residues 2034 to 2046 (GMNNAMNNGAGNA) show a composition bias toward low complexity. The LXXLL signature appears at 2341-2345 (LRVLL). Residues 2609–2641 (AQGSQPQAQPDGAPGPLGNNTGAANQQQNPNTN) form a disordered region.

It belongs to the CNOT1 family. As to quaternary structure, component of the CCR4-NOT complex at least composed of ccf-1, ccr-4 and let-711, which is required for germ cell development in hermaphrodites. Within the complex interacts with ccf-1 and ccr-4; the interactions are direct. In terms of tissue distribution, highly expressed in the germline of hermaphrodites.

It localises to the nucleus. Its function is as follows. Scaffolding component of the CCR4-NOT complex which is one of the major cellular mRNA deadenylases and is linked to various cellular processes including bulk mRNA degradation, miRNA-mediated repression, translational repression during translational initiation and general transcription regulation. Positively regulates the accumulation of the CCR4-NOT complex component ccr-1. Within the complex promotes germ cell development and fertility in hermaphrodites. Additional complex functions may be a consequence of its influence on mRNA expression. Its scaffolding function implies its interaction with the catalytic complex module and diverse RNA-binding proteins mediating the complex recruitment to selected mRNA 3'UTRs. Mediates the recruitment of the CCR4-NOT complex to miRNA targets and to the RISC complex. Acts as a transcriptional repressor. Represses the ligand-dependent transcriptional activation by nuclear receptors. In embryos, plays a role in female pronucleus and mitotic spindle positioning during the first cleavage divisions after fertilization. This may partly be through negatively regulating the accumulation of zyg-9 at the centrosome. Negatively regulates the formation of long astral microtubules in developing embryos. Required for the stabilization and degradation of maternal mRNAs such as nos-2 in somatic blastomeres. This is CCR4-NOT transcription complex subunit let-711 from Caenorhabditis elegans.